The chain runs to 480 residues: Transmembrane protein 161A (480 aa).

An N-terminal signal peptide occupies residues 1 to 28 (MAVLGVQLVVTLFTATLMHRLAPHCSFA). At 29-98 (RWLLCNGSLF…LTAVDALVLR (70 aa)) the chain is on the extracellular side. An N-linked (GlcNAc...) asparagine glycan is attached at Asn34. A helical transmembrane segment spans residues 99–119 (FFLEYQWFVDFAVYSVGVYLF). Topologically, residues 120–134 (TEAYYFVLGPVQETN) are cytoplasmic. A helical membrane pass occupies residues 135–155 (IAVFWCLLTLAFSLKVFLMVT). Residues 156-166 (RLYFSTKEGGE) are Extracellular-facing. Residues 167 to 187 (RSVCLSFAFLFLLLAMLVQVV) form a helical membrane-spanning segment. Topologically, residues 188–224 (REETLELGLEPGLASMTQHLEPILKKQDWDWTLPVIK) are cytoplasmic. The chain crosses the membrane as a helical span at residues 225–245 (LAIRLGLAVLGSLLGAFLIFP). The Extracellular segment spans residues 246 to 263 (GLRLAQTHQDALTLSADR). The helical transmembrane segment at 264-284 (PLLQLLLHTSFLSPLCTLWLW) threads the bilayer. Residues 285 to 304 (TKPVARDFLYQAPTRNMTFS) lie on the Cytoplasmic side of the membrane. A helical membrane pass occupies residues 305 to 325 (VPSEGAFDSLRLWVLVALCLL). The Extracellular portion of the chain corresponds to 326 to 370 (RLAVTRPHLQAYLCLAKARVEQLRKEAGRIEAREIQQRVVRVYCY). A helical transmembrane segment spans residues 371 to 391 (VTVVSLQYLTPLILTLHCTLL). Topologically, residues 392 to 450 (LKTLGGYSWALSSTPPPLAPSQPSEALIPVDPAGDEAQQTAAQVAGILGGLLTPLFLRG) are cytoplasmic. Residues 451 to 473 (MLAYIIWWTAACQLLSSLFGLYF) form a helical membrane-spanning segment. Over 474–480 (HQHLAAS) the chain is Extracellular.

It belongs to the TMEM161 family.

The protein resides in the membrane. Its function is as follows. May play a role in protection against oxidative stress. Overexpression leads to reduced levels of oxidant-induced DNA damage and apoptosis. This is Transmembrane protein 161A (Tmem161a) from Mus musculus (Mouse).